The sequence spans 623 residues: Phosphatidylinositol-3-phosphatase SAC1 (623 aa).

At 1 to 523 the chain is on the cytoplasmic side; it reads MTGPIVYVQN…SPFPDRRPVY (523 aa). An SAC domain is found at 115–454; that stretch reads LELHLKNSTF…ADAVSVAYSG (340 aa). Glycyl lysine isopeptide (Lys-Gly) (interchain with G-Cter in ubiquitin) cross-links involve residues Lys-246 and Lys-358. Residues 524 to 544 traverse the membrane as a helical segment; sequence IQLIPMIICAALTVLGATIFF. Topologically, residues 545–552 are lumenal; sequence PKDRFTSS. A helical membrane pass occupies residues 553–573; that stretch reads KNLLYFAGASIVLALSTKFMF. Residues 574–623 are Cytoplasmic-facing; sequence KNGIQFVNWPKLVDVGFLVVHQTHDKEQQFKGLKYAQSPKFSKPDPLKRD.

In terms of assembly, component of the SPOTS complex, at least composed of LCB1/2 (LCB1 and/or LCB2), ORM1/2 (ORM1 and/or ORM2), SAC1 and TSC3.

The protein localises to the endoplasmic reticulum membrane. It is found in the golgi apparatus membrane. The catalysed reaction is a 1,2-diacyl-sn-glycero-3-phospho-(1D-myo-inositol-3-phosphate) + H2O = a 1,2-diacyl-sn-glycero-3-phospho-(1D-myo-inositol) + phosphate. It carries out the reaction a 1,2-diacyl-sn-glycero-3-phospho-(1D-myo-inositol 4-phosphate) + H2O = a 1,2-diacyl-sn-glycero-3-phospho-(1D-myo-inositol) + phosphate. In terms of biological role, phosphoinositide phosphatase which catalyzes the hydrolysis of phosphatidylinositol 3-phosphate (PtdIns(3)P) and phosphatidylinositol 4-phosphate (PtdIns(4)P). Has low activity towards phosphatidylinositol-3,5-bisphosphate (PtdIns(3,5)P2). May be involved in the coordination of the activities of the secretory pathway and the actin cytoskeleton. The sequence is that of Phosphatidylinositol-3-phosphatase SAC1 (SAC1) from Saccharomyces cerevisiae (strain ATCC 204508 / S288c) (Baker's yeast).